The sequence spans 521 residues: Glucose-6-phosphate isomerase (521 aa).

The active-site Proton donor is Glu-351. Catalysis depends on residues His-382 and Lys-491.

Belongs to the GPI family.

The protein resides in the cytoplasm. The catalysed reaction is alpha-D-glucose 6-phosphate = beta-D-fructose 6-phosphate. It functions in the pathway carbohydrate biosynthesis; gluconeogenesis. It participates in carbohydrate degradation; glycolysis; D-glyceraldehyde 3-phosphate and glycerone phosphate from D-glucose: step 2/4. Its function is as follows. Catalyzes the reversible isomerization of glucose-6-phosphate to fructose-6-phosphate. The chain is Glucose-6-phosphate isomerase from Polaromonas naphthalenivorans (strain CJ2).